The chain runs to 312 residues: Olfactory receptor 6C75 (312 aa).

The Extracellular segment spans residues 1 to 23 (MRNSTAVTDFILLGLTSDPQWQV). Asn3 is a glycosylation site (N-linked (GlcNAc...) asparagine). Residues 24-44 (VLFIFLLVTYMLSVTGNLIII) form a helical membrane-spanning segment. Over 45-63 (TLTLSDPHLQTPMYFFLRN) the chain is Cytoplasmic. A helical transmembrane segment spans residues 64–84 (FSFLEISFTSVCIPRFLVTVV). The Extracellular portion of the chain corresponds to 85 to 95 (TGNRTISYNGC). A disulfide bond links Cys95 and Cys177. A helical membrane pass occupies residues 96 to 116 (VAQLFFFIFLGVTEFYLLAAM). Residues 117–140 (SYDRCMAICKPLHYTIIMSTRVCT) are Cytoplasmic-facing. A helical transmembrane segment spans residues 141-161 (LLVFSSWLAGFLIIFPPVMLL). Residues 162-194 (LQLDFCASNVIDHFICDSSPMLQLSCTNTHFLE) are Extracellular-facing. A helical membrane pass occupies residues 195–215 (LMAFFLAVVTLMVTLTLVILS). The Cytoplasmic portion of the chain corresponds to 216–237 (YTNIIRTILKIPSMSQRKKAFS). Residues 238 to 258 (TCSSHMIVVSISYSSCIFMYI) form a helical membrane-spanning segment. Residues 259–269 (KTSARERVTLS) lie on the Extracellular side of the membrane. The helical transmembrane segment at 270–290 (KGVAVLNTSVAPLLNPFIYTL) threads the bilayer. Residues 291 to 312 (RNKQVKQAFKSMVQKMIFSLNK) lie on the Cytoplasmic side of the membrane.

The protein belongs to the G-protein coupled receptor 1 family.

Its subcellular location is the cell membrane. Functionally, odorant receptor. The protein is Olfactory receptor 6C75 (OR6C75) of Homo sapiens (Human).